The sequence spans 110 residues: Thiosulfate sulfurtransferase GlpE (110 aa).

Residues 17–105 (RENGAQVVDI…WRSVYPADTS (89 aa)) enclose the Rhodanese domain. C65 serves as the catalytic Cysteine persulfide intermediate.

Belongs to the GlpE family.

Its subcellular location is the cytoplasm. The catalysed reaction is thiosulfate + hydrogen cyanide = thiocyanate + sulfite + 2 H(+). The enzyme catalyses thiosulfate + [thioredoxin]-dithiol = [thioredoxin]-disulfide + hydrogen sulfide + sulfite + 2 H(+). Transferase that catalyzes the transfer of sulfur from thiosulfate to thiophilic acceptors such as cyanide or dithiols. May function in a CysM-independent thiosulfate assimilation pathway by catalyzing the conversion of thiosulfate to sulfite, which can then be used for L-cysteine biosynthesis. The protein is Thiosulfate sulfurtransferase GlpE of Pseudomonas aeruginosa (strain ATCC 15692 / DSM 22644 / CIP 104116 / JCM 14847 / LMG 12228 / 1C / PRS 101 / PAO1).